A 143-amino-acid polypeptide reads, in one-letter code: 3-hydroxyacyl-[acyl-carrier-protein] dehydratase FabZ (143 aa).

H49 is a catalytic residue.

It belongs to the thioester dehydratase family. FabZ subfamily.

The protein resides in the cytoplasm. The catalysed reaction is a (3R)-hydroxyacyl-[ACP] = a (2E)-enoyl-[ACP] + H2O. Functionally, involved in unsaturated fatty acids biosynthesis. Catalyzes the dehydration of short chain beta-hydroxyacyl-ACPs and long chain saturated and unsaturated beta-hydroxyacyl-ACPs. In Wolbachia pipientis wMel, this protein is 3-hydroxyacyl-[acyl-carrier-protein] dehydratase FabZ.